Consider the following 398-residue polypeptide: Signal-regulatory protein beta-1 (398 aa).

The N-terminal stretch at 1–29 (MPVPASWPHLPSPFLLMTLLLGRLTGVAG) is a signal peptide. The region spanning 30-136 (EDELQVIQPE…SPDDVEFKSG (107 aa)) is the Ig-like V-type domain. Over 30 to 371 (EDELQVIQPE…EAALAPTAPL (342 aa)) the chain is Extracellular. Cystine bridges form between C54-C120 and C169-C227. 2 Ig-like C1-type domains span residues 147-246 (PSAP…ANLS) and 253-347 (PTLE…YALE). 3 N-linked (GlcNAc...) asparagine glycosylation sites follow: N244, N269, and N291. The helical transmembrane segment at 372–392 (LVALLLGPKLLLVVGVSAIYI) threads the bilayer. Over 393–398 (CWKQKA) the chain is Cytoplasmic.

Homodimer; disulfide-linked. Interacts with TYROBP. This interaction results in the recruitment of SYK. N-glycosylated. As to expression, detected in monocytes and dendritic cells.

It localises to the cell membrane. Functionally, immunoglobulin-like cell surface receptor involved in the negative regulation of receptor tyrosine kinase-coupled signaling processes. Also participates in the recruitment of tyrosine kinase SYK. Triggers activation of myeloid cells when associated with TYROBP. This Homo sapiens (Human) protein is Signal-regulatory protein beta-1 (SIRPB1).